The sequence spans 247 residues: Mast cell protease 2 (247 aa).

The signal sequence occupies residues 1 to 19; sequence MHLLALHLLLFLLGSRAKA. The propeptide at 20 to 21 is activation peptide; sequence GE. Residues 22–245 enclose the Peptidase S1 domain; the sequence is IIGGTECKPH…YRPWINKILR (224 aa). C51 and C67 are joined by a disulfide. H66 serves as the catalytic Charge relay system. A glycan (N-linked (GlcNAc...) asparagine) is linked at N80. Catalysis depends on D110, which acts as the Charge relay system. Cystine bridges form between C144–C209 and C175–C188. S203 (charge relay system) is an active-site residue.

The protein belongs to the peptidase S1 family. Granzyme subfamily.

In Meriones unguiculatus (Mongolian jird), this protein is Mast cell protease 2.